Consider the following 429-residue polypeptide: Histidine--tRNA ligase (429 aa).

This sequence belongs to the class-II aminoacyl-tRNA synthetase family. As to quaternary structure, homodimer.

The protein localises to the cytoplasm. It carries out the reaction tRNA(His) + L-histidine + ATP = L-histidyl-tRNA(His) + AMP + diphosphate + H(+). In Rippkaea orientalis (strain PCC 8801 / RF-1) (Cyanothece sp. (strain PCC 8801)), this protein is Histidine--tRNA ligase.